The sequence spans 239 residues: Pyrroloquinoline-quinone synthase (239 aa).

This sequence belongs to the PqqC family.

The enzyme catalyses 6-(2-amino-2-carboxyethyl)-7,8-dioxo-1,2,3,4,7,8-hexahydroquinoline-2,4-dicarboxylate + 3 O2 = pyrroloquinoline quinone + 2 H2O2 + 2 H2O + H(+). The protein operates within cofactor biosynthesis; pyrroloquinoline quinone biosynthesis. In terms of biological role, ring cyclization and eight-electron oxidation of 3a-(2-amino-2-carboxyethyl)-4,5-dioxo-4,5,6,7,8,9-hexahydroquinoline-7,9-dicarboxylic-acid to PQQ. This Gluconobacter oxydans (strain 621H) (Gluconobacter suboxydans) protein is Pyrroloquinoline-quinone synthase.